A 132-amino-acid polypeptide reads, in one-letter code: Venom CUB domain-containing protein 2 (132 aa).

The first 17 residues, 1–17 (MKTLFLAIALFSAVALA), serve as a signal peptide directing secretion. The CUB domain occupies 22–129 (ESAELVPGGE…RGFVACKATA (108 aa)). Intrachain disulfides connect cysteine 66–cysteine 125 and cysteine 77–cysteine 94.

Belongs to the venom CUB family. In terms of tissue distribution, expressed by the venom gland (posterior main gland) (at protein level).

It localises to the secreted. The chain is Venom CUB domain-containing protein 2 from Platymeris rhadamanthus (Red spot assassin bug).